Here is a 235-residue protein sequence, read N- to C-terminus: STARD3 N-terminal-like protein (235 aa).

At M1 the chain carries N-acetylmethionine. Positions 1–20 are disordered; the sequence is MNHLPEHMENTLTGSQSSHA. Residues 1 to 53 are Cytoplasmic-facing; it reads MNHLPEHMENTLTGSQSSHASLRDIHSINPAQLMARIESYEGREKKGISDVRR. A compositionally biased stretch (polar residues) spans 10 to 20; sequence NTLTGSQSSHA. Phosphoserine is present on residues S15, S21, and S27. The MENTAL domain maps to 48–218; that stretch reads ISDVRRTFCL…YSPPESEAGS (171 aa). Residues 54–74 form a helical membrane-spanning segment; it reads TFCLFVTFDLLFVTLLWIIEL. Residues 75–97 lie on the Extracellular side of the membrane; it reads NVNGGIENTLKKEVIHYDYYSSY. A helical transmembrane segment spans residues 98 to 118; the sequence is FDIFLLAVFRFKVLILGYAVC. Residues 119-122 lie on the Cytoplasmic side of the membrane; it reads RLRH. Residues 123–143 form a helical membrane-spanning segment; it reads WWAIALTTAVTSAFLLAKVIL. The Extracellular segment spans residues 144–150; sequence SKLFSQG. The helical transmembrane segment at 151–171 threads the bilayer; sequence AFGYVLPIISFILAWIETWFL. Over 172–235 the chain is Cytoplasmic; sequence DFKVLPQEAE…QESEKPLLEL (64 aa). Position 193 is a phosphoserine (S193). The tract at residues 202 to 235 is disordered; it reads GLSDGQFYSPPESEAGSEEEAEEKQESEKPLLEL. The short motif at 208–213 is the FFAT element; it reads FYSPPE. The segment covering 225–235 has biased composition (basic and acidic residues); sequence KQESEKPLLEL.

It belongs to the STARD3 family. As to quaternary structure, homodimer. Interacts (via the MENTAL domain) with STARD3NL. Interacts (via FFAT motif) with VAPA. Interacts (via FFAT motif) with VAPB. Interacts (via FFAT motif) with MOSPD2 (via MSP domain).

It localises to the late endosome membrane. Tethering protein that creates contact site between the endoplasmic reticulum and late endosomes: localizes to late endosome membranes and contacts the endoplasmic reticulum via interaction with VAPA and VAPB. The protein is STARD3 N-terminal-like protein of Mus musculus (Mouse).